Here is a 636-residue protein sequence, read N- to C-terminus: Protein cueball (636 aa).

An N-terminal signal peptide occupies residues 1-27 (MKLCTSQQFGVAVLFIVLNICSPLADA). Topologically, residues 28–517 (SPIAWDFAVT…ADGPSSLRSG (490 aa)) are extracellular. 2 N-linked (GlcNAc...) asparagine glycosylation sites follow: asparagine 83 and asparagine 109. 3 LDL-receptor class B repeats span residues 122–169 (RNLF…DICR), 170–214 (RQLY…DQLS), and 215–260 (DRIF…TEDT). A glycan (N-linked (GlcNAc...) asparagine) is linked at asparagine 190. N-linked (GlcNAc...) asparagine glycosylation is found at asparagine 285 and asparagine 339. 2 consecutive EGF-like domains span residues 350-384 (RMDA…ARCE) and 419-456 (EYYK…TRCE). Disulfide bonds link cysteine 359–cysteine 372, cysteine 374–cysteine 383, cysteine 423–cysteine 433, cysteine 427–cysteine 444, and cysteine 446–cysteine 455. N-linked (GlcNAc...) asparagine glycans are attached at residues asparagine 449, asparagine 458, and asparagine 493. Residues 518 to 538 (SVIIVLVVGIVSSLALVAVIV) form a helical membrane-spanning segment. Residues 539-636 (HGLRLIYKPK…IHNMEDDLLT (98 aa)) are Cytoplasmic-facing.

It belongs to the cueball family.

The protein resides in the cell membrane. Its function is as follows. Has a role in spermatogenesis and oogenesis. In Drosophila virilis (Fruit fly), this protein is Protein cueball.